Consider the following 492-residue polypeptide: ATP synthase subunit beta, plastid (492 aa).

170–177 (GGAGVGKT) provides a ligand contact to ATP.

This sequence belongs to the ATPase alpha/beta chains family. F-type ATPases have 2 components, CF(1) - the catalytic core - and CF(0) - the membrane proton channel. CF(1) has five subunits: alpha(3), beta(3), gamma(1), delta(1), epsilon(1). CF(0) has four main subunits: a(1), b(1), b'(1) and c(9-12).

The protein resides in the plastid membrane. The catalysed reaction is ATP + H2O + 4 H(+)(in) = ADP + phosphate + 5 H(+)(out). Its function is as follows. Produces ATP from ADP in the presence of a proton gradient across the membrane. The catalytic sites are hosted primarily by the beta subunits. This Aneura mirabilis (Parasitic liverwort) protein is ATP synthase subunit beta, plastid.